The following is a 178-amino-acid chain: Translation initiation factor IF-3 (178 aa).

It belongs to the IF-3 family. In terms of assembly, monomer.

The protein resides in the cytoplasm. IF-3 binds to the 30S ribosomal subunit and shifts the equilibrium between 70S ribosomes and their 50S and 30S subunits in favor of the free subunits, thus enhancing the availability of 30S subunits on which protein synthesis initiation begins. In Nautilia profundicola (strain ATCC BAA-1463 / DSM 18972 / AmH), this protein is Translation initiation factor IF-3.